Consider the following 514-residue polypeptide: Na(+)/H(+) antiporter NhaB (514 aa).

The next 12 helical transmembrane spans lie at 23–43, 52–72, 97–117, 120–140, 144–164, 202–222, 238–258, 303–323, 357–377, 391–411, 447–467, and 475–495; these read LALLVFLIINPLTFFTNSFVA, IFTLAMALKCYPLLPGGLLAI, LLLMFMVAGIYFMKQLLLFIF, LLLSIRSKMVLSLAFCVAAAF, FLDALTVVAVVISVAVGFYGI, LMMHAGVGTALGGVMTMVGEP, FFLRMSPVTVPVLVCGLLTCM, AIIGVWLVTALALHLAEVGLI, LTVFFSIVAVIIDQHLFAPII, LFYLFNGLLSSISDNVFVGTI, ATPNGQAAFLFLLTSALAPLI, and VWMALPYTIILTLVGLLCVEF.

Belongs to the NhaB Na(+)/H(+) (TC 2.A.34) antiporter family.

It is found in the cell inner membrane. It carries out the reaction 2 Na(+)(in) + 3 H(+)(out) = 2 Na(+)(out) + 3 H(+)(in). Na(+)/H(+) antiporter that extrudes sodium in exchange for external protons. This Salmonella arizonae (strain ATCC BAA-731 / CDC346-86 / RSK2980) protein is Na(+)/H(+) antiporter NhaB.